Consider the following 132-residue polypeptide: Small ribosomal subunit protein uS8 (132 aa).

This sequence belongs to the universal ribosomal protein uS8 family. Part of the 30S ribosomal subunit. Contacts proteins S5 and S12.

Functionally, one of the primary rRNA binding proteins, it binds directly to 16S rRNA central domain where it helps coordinate assembly of the platform of the 30S subunit. The sequence is that of Small ribosomal subunit protein uS8 from Rhodopseudomonas palustris (strain HaA2).